We begin with the raw amino-acid sequence, 141 residues long: Cytochrome c-type biogenesis protein CcmE (141 aa).

Residues 1–7 are Cytoplasmic-facing; it reads MQRKHKR. Residues 8 to 28 traverse the membrane as a helical; Signal-anchor for type II membrane protein segment; sequence ILFVAVSFIALGCVSAFVLFE. Residues 29–141 lie on the Periplasmic side of the membrane; that stretch reads LSKSISFFCT…SSDAAVIGSS (113 aa). Residues H121 and Y125 each contribute to the heme site.

It belongs to the CcmE/CycJ family.

The protein resides in the cell inner membrane. In terms of biological role, heme chaperone required for the biogenesis of c-type cytochromes. Transiently binds heme delivered by CcmC and transfers the heme to apo-cytochromes in a process facilitated by CcmF and CcmH. In Anaplasma phagocytophilum (strain HZ), this protein is Cytochrome c-type biogenesis protein CcmE.